The chain runs to 360 residues: MNAPLGGIWLWLPLLLTWLTPEVSSSWWYMRATGGSSRVMCDNVPGLVSRQRQLCHRHPDVMRAIGLGVAEWTAECQHQFRQHRWNCNTLDRDHSLFGRVLLRSSRESAFVYAISSAGVVFAITRACSQGELKSCSCDPKKKGTAKDSKGTFDWGGCSDNIDHGIKFARAFVDAKERKGKDARALMNLHNNRAGRKAVKRFLKQECKCHGVSGSCTLRTCWLAMADFRKTGDYLWRKYNGAIQVVMNQDGTGFTVANKRFKKPTKNDLVYFENSPDYCIRDRDAGSLGTAGRVCNLTSRGMDSCEVMCCGRGYDTSHVTRMTKCECKFHWCCAVRCQDCLEALDVHTCKAPKSADWAVPT.

The N-terminal stretch at 1 to 25 (MNAPLGGIWLWLPLLLTWLTPEVSS) is a signal peptide. 11 disulfides stabilise this stretch: Cys76/Cys87, Cys127/Cys135, Cys137/Cys157, Cys206/Cys220, Cys208/Cys215, Cys278/Cys309, Cys294/Cys304, Cys308/Cys348, Cys324/Cys339, Cys326/Cys336, and Cys331/Cys332. Ser212 carries the O-palmitoleoyl serine; by PORCN lipid modification. A glycan (N-linked (GlcNAc...) asparagine) is linked at Asn295.

It belongs to the Wnt family. Post-translationally, palmitoleoylation is required for efficient binding to frizzled receptors. Depalmitoleoylation leads to Wnt signaling pathway inhibition.

Its subcellular location is the secreted. It localises to the extracellular space. It is found in the extracellular matrix. Its function is as follows. Ligand for members of the frizzled family of seven transmembrane receptors. Functions in the canonical Wnt signaling pathway that results in activation of transcription factors of the TCF/LEF family. The chain is Protein Wnt-2 (WNT2) from Dasypus novemcinctus (Nine-banded armadillo).